A 160-amino-acid chain; its full sequence is Protein MGF 300-2R (160 aa).

The protein belongs to the asfivirus MGF 300 family.

Its function is as follows. Plays a role in virus cell tropism, and may be required for efficient virus replication in macrophages. This chain is Protein MGF 300-2R, found in Ornithodoros (relapsing fever ticks).